Consider the following 378-residue polypeptide: Atypical chemokine receptor 2 (378 aa).

At 1–49 (MPTVASPLPLTTVGSENSSSIYDYDYLDDMTILVCRKDEVLSFGRVFLP) the chain is on the extracellular side. Asn-17 carries N-linked (GlcNAc...) asparagine glycosylation. A helical membrane pass occupies residues 50-70 (VVYSLIFVLGLAGNLLLLVVL). The Cytoplasmic segment spans residues 71-91 (LHSAPRRRTMELYLLNLAVSN). A helical transmembrane segment spans residues 92–112 (LLFVVTMPFWAISVAWHWVFG). The Extracellular segment spans residues 113–117 (SFLCK). The cysteines at positions 116 and 194 are disulfide-linked. Residues 118–139 (VISTLYSINFYCGIFFITCMSL) form a helical membrane-spanning segment. At 140-161 (DKYLEIVHAQPLHRPKAQFRNL) the chain is on the cytoplasmic side. A helical membrane pass occupies residues 162 to 182 (LLIVMVWITSLAISVPEMVFV). The Extracellular portion of the chain corresponds to 183 to 216 (QIHQTLDGVWHCYADFGGHATIWKLYLRFQLNLL). The chain crosses the membrane as a helical span at residues 217–237 (GFLLPLLAMIFFYSRIGCVLV). Over 238 to 249 (RLRPPGQGRALR) the chain is Cytoplasmic. The chain crosses the membrane as a helical span at residues 250 to 270 (MAAALVIVFFMLWFPYNLTLF). At 271–292 (LHSLLDLHVFGNCEISHRLDYT) the chain is on the extracellular side. A helical membrane pass occupies residues 293 to 313 (LQVTESLAFSHCCFTPVLYAF). Residues 314-378 (CSHRFRRYLK…SLNKGEMGNT (65 aa)) are Cytoplasmic-facing. Positions 326 to 378 (LSVMLRWHQAPGTPSSNHSESSRVTAQEDVVSMNDLGERQSEDSLNKGEMGNT) are C-terminal cytoplasmic tail.

The protein belongs to the G-protein coupled receptor 1 family. Atypical chemokine receptor subfamily. In terms of processing, phosphorylated on serine residues in the C-terminal cytoplasmic tail. As to expression, expressed on apoptotic neutrophils (at protein level).

The protein resides in the early endosome. It localises to the recycling endosome. The protein localises to the cell membrane. Atypical chemokine receptor that controls chemokine levels and localization via high-affinity chemokine binding that is uncoupled from classic ligand-driven signal transduction cascades, resulting instead in chemokine sequestration, degradation, or transcytosis. Also known as interceptor (internalizing receptor) or chemokine-scavenging receptor or chemokine decoy receptor. Acts as a receptor for chemokines including CCL2, CCL3, CCL3L1, CCL4, CCL5, CCL7, CCL8, CCL11, CCL13, CCL17, CCL22, CCL23, CCL24, SCYA2/MCP-1, SCY3/MIP-1-alpha, SCYA5/RANTES and SCYA7/MCP-3. Upon active ligand stimulation, activates a beta-arrestin 1 (ARRB1)-dependent, G protein-independent signaling pathway that results in the phosphorylation of the actin-binding protein cofilin (CFL1) through a RAC1-PAK1-LIMK1 signaling pathway. Activation of this pathway results in up-regulation of ACKR2 from endosomal compartment to cell membrane, increasing its efficiency in chemokine uptake and degradation. By scavenging chemokines in tissues, on the surfaces of lymphatic vessels, and in placenta, plays an essential role in the resolution (termination) of the inflammatory response and in the regulation of adaptive immune responses. Plays a major role in the immune silencing of macrophages during the resolution of inflammation. Acts as a regulator of inflammatory leukocyte interactions with lymphatic endothelial cells (LECs) and is required for immature/mature dendritic cells discrimination by LECs. The polypeptide is Atypical chemokine receptor 2 (Ackr2) (Mus musculus (Mouse)).